The following is a 295-amino-acid chain: Small ribosomal subunit protein uS2 (295 aa).

Serine 2 carries the N-acetylserine modification. Serine 43 carries the phosphoserine modification. Residue lysine 52 is modified to N6-acetyllysine. Positions 54–113 are interaction with PPP1R16B; the sequence is TWEKLLLAARAIVAIENPADVSVISSRNTGQRAVLKFAAATGATPIAGRFTPGTFTNQIQ. Residue lysine 89 is modified to N6-acetyllysine; alternate. Residue lysine 89 forms a Glycyl lysine isopeptide (Lys-Gly) (interchain with G-Cter in SUMO2); alternate linkage. Threonine 97 bears the Phosphothreonine mark. Laminin-binding stretches follow at residues 161–180 and 205–229; these read IPCN…MLAR and RDPE…EFQG. [DE]-W-[ST] repeat units lie at residues 230–232, 247–249, 266–268, 275–277, and 293–295; these read EWT, DWS, and EWS. Residues 242–295 are laminin-binding; it reads QPEVADWSEGVQVPSVPIQQFPTEDWSAQPTTEDWSAAPTAQATEWVGTTTEWS. Positions 266–295 are disordered; the sequence is DWSAQPTTEDWSAAPTAQATEWVGTTTEWS.

It belongs to the universal ribosomal protein uS2 family. In terms of assembly, monomer (37LRP) and homodimer (67LR). Component of the small ribosomal subunit. Mature ribosomes consist of a small (40S) and a large (60S) subunit. The 40S subunit contains about 33 different proteins and 1 molecule of RNA (18S). The 60S subunit contains about 49 different proteins and 3 molecules of RNA (28S, 5.8S and 5S). Interacts with RPS21. Interacts with several laminins including at least LAMB1. Interacts with MDK. The mature dimeric form interacts with PPP1R16B (via its fourth ankyrin repeat). Interacts with PPP1CA only in the presence of PPP1R16B. Post-translationally, acylated. Acylation may be a prerequisite for conversion of the monomeric 37 kDa laminin receptor precursor (37LRP) to the mature dimeric 67 kDa laminin receptor (67LR), and may provide a mechanism for membrane association. In terms of processing, cleaved by stromelysin-3 (ST3) at the cell surface. Cleavage by stromelysin-3 may be a mechanism to alter cell-extracellular matrix interactions.

The protein localises to the cell membrane. The protein resides in the cytoplasm. It is found in the nucleus. Functionally, required for the assembly and/or stability of the 40S ribosomal subunit. Required for the processing of the 20S rRNA-precursor to mature 18S rRNA in a late step of the maturation of 40S ribosomal subunits. Also functions as a cell surface receptor for laminin. Plays a role in cell adhesion to the basement membrane and in the consequent activation of signaling transduction pathways. May play a role in cell fate determination and tissue morphogenesis. Also acts as a receptor for several other ligands, including the pathogenic prion protein, viruses, and bacteria. Acts as a PPP1R16B-dependent substrate of PPP1CA. This Sus scrofa (Pig) protein is Small ribosomal subunit protein uS2.